The primary structure comprises 470 residues: Neuraminidase (470 aa).

Over 1 to 6 (MNPNQK) the chain is Intravirion. Residues 7-27 (IITIGSICMAIGIISLILQIG) traverse the membrane as a helical segment. Residues 11–33 (GSICMAIGIISLILQIGNIISIW) are involved in apical transport and lipid raft association. Residues 28–470 (NIISIWVSHS…GAELPFTIDK (443 aa)) are Virion surface-facing. Residues 36-90 (HSIQTGSQNHTGICNQRIITYENSTWVNQTYVNISNTNVVAGKDTTSMTLAGNSS) form a hypervariable stalk region region. N44, N58, N63, N68, and N88 each carry an N-linked (GlcNAc...) asparagine; by host glycan. Residues 91–470 (LCPIRGWAIY…GAELPFTIDK (380 aa)) form a head of neuraminidase region. 8 disulfide bridges follow: C92-C417, C124-C129, C184-C231, C233-C238, C279-C292, C281-C290, C318-C335, and C421-C447. A substrate-binding site is contributed by R118. N-linked (GlcNAc...) asparagine; by host glycosylation is present at N146. The active-site Proton donor/acceptor is D151. Substrate is bound at residue R152. N-linked (GlcNAc...) asparagine; by host glycosylation is present at N235. 277–278 (EE) serves as a coordination point for substrate. R293 provides a ligand contact to substrate. Ca(2+) contacts are provided by D294, G298, and D324. The N-linked (GlcNAc...) asparagine; by host glycan is linked to N365. R368 serves as a coordination point for substrate. Y402 (nucleophile) is an active-site residue. N455 carries an N-linked (GlcNAc...) asparagine; by host glycan.

This sequence belongs to the glycosyl hydrolase 34 family. As to quaternary structure, homotetramer. Requires Ca(2+) as cofactor. N-glycosylated.

The protein localises to the virion membrane. It localises to the host apical cell membrane. The catalysed reaction is Hydrolysis of alpha-(2-&gt;3)-, alpha-(2-&gt;6)-, alpha-(2-&gt;8)- glycosidic linkages of terminal sialic acid residues in oligosaccharides, glycoproteins, glycolipids, colominic acid and synthetic substrates.. Its activity is regulated as follows. Inhibited by the neuraminidase inhibitors zanamivir (Relenza) and oseltamivir (Tamiflu). These drugs interfere with the release of progeny virus from infected cells and are effective against all influenza strains. Resistance to neuraminidase inhibitors is quite rare. Catalyzes the removal of terminal sialic acid residues from viral and cellular glycoconjugates. Cleaves off the terminal sialic acids on the glycosylated HA during virus budding to facilitate virus release. Additionally helps virus spread through the circulation by further removing sialic acids from the cell surface. These cleavages prevent self-aggregation and ensure the efficient spread of the progeny virus from cell to cell. Otherwise, infection would be limited to one round of replication. Described as a receptor-destroying enzyme because it cleaves a terminal sialic acid from the cellular receptors. May facilitate viral invasion of the upper airways by cleaving the sialic acid moieties on the mucin of the airway epithelial cells. Likely to plays a role in the budding process through its association with lipid rafts during intracellular transport. May additionally display a raft-association independent effect on budding. Plays a role in the determination of host range restriction on replication and virulence. Sialidase activity in late endosome/lysosome traffic seems to enhance virus replication. This is Neuraminidase from Aves (Human).